Here is a 792-residue protein sequence, read N- to C-terminus: Molybdenum cofactor sulfurase (792 aa).

At Lys246 the chain carries N6-(pyridoxal phosphate)lysine. The active site involves Cys414. Residues 646-792 (LRLLRQSSQR…LTCGDVVVVT (147 aa)) enclose the MOSC domain. Ser748 is modified (phosphoserine).

It belongs to the class-V pyridoxal-phosphate-dependent aminotransferase family. MOCOS subfamily. It depends on pyridoxal 5'-phosphate as a cofactor.

The catalysed reaction is Mo-molybdopterin + L-cysteine + AH2 = thio-Mo-molybdopterin + L-alanine + A + H2O. It participates in cofactor biosynthesis; molybdopterin biosynthesis. Sulfurates the molybdenum cofactor. Sulfation of molybdenum is essential for xanthine dehydrogenase (XDH) and aldehyde oxidase (ADO) enzymes in which molybdenum cofactor is liganded by 1 oxygen and 1 sulfur atom in active form. This chain is Molybdenum cofactor sulfurase, found in Drosophila pseudoobscura pseudoobscura (Fruit fly).